Here is a 213-residue protein sequence, read N- to C-terminus: Lysozyme g-like protein 2 (213 aa).

The first 19 residues, 1 to 19 (MVPSVVFWGLIALVGTAKG), serve as a signal peptide directing secretion. 2 disulfides stabilise this stretch: Cys-40/Cys-93 and Cys-54/Cys-62. Residue Glu-106 is part of the active site.

It belongs to the glycosyl hydrolase 23 family.

It is found in the secreted. Functionally, may act as a potent antibacterial protein that may play a role in the innate immunity. The polypeptide is Lysozyme g-like protein 2 (Lyg2) (Mus musculus (Mouse)).